Here is a 292-residue protein sequence, read N- to C-terminus: Ribosomal protein L11 methyltransferase (292 aa).

Residues Thr-144, Gly-165, Asp-187, and Asn-229 each contribute to the S-adenosyl-L-methionine site.

This sequence belongs to the methyltransferase superfamily. PrmA family.

It is found in the cytoplasm. It carries out the reaction L-lysyl-[protein] + 3 S-adenosyl-L-methionine = N(6),N(6),N(6)-trimethyl-L-lysyl-[protein] + 3 S-adenosyl-L-homocysteine + 3 H(+). Its function is as follows. Methylates ribosomal protein L11. The sequence is that of Ribosomal protein L11 methyltransferase from Azotobacter vinelandii (strain DJ / ATCC BAA-1303).